We begin with the raw amino-acid sequence, 542 residues long: Carbamoyl phosphate synthase large chain, C-terminal section (542 aa).

The interval 1–389 (MSDKVLVIGA…WKAQLAAGHE (389 aa)) is carbamoyl phosphate synthetic domain. The ATP-grasp domain occupies 122-316 (SKLLKKLGIP…LAKIGTKAIL (195 aa)). Residues Arg158, Arg197, Ile199, Glu204, Gly230, Val231, His232, Ser233, Gln273, and Glu287 each contribute to the ATP site. Mg(2+)-binding residues include Gln273, Glu287, and Asn289. The Mn(2+) site is built by Gln273, Glu287, and Asn289. The MGS-like domain occupies 388-542 (HELPLEGTAV…KPEELTRYGG (155 aa)). The tract at residues 390-542 (LPLEGTAVIS…KPEELTRYGG (153 aa)) is allosteric domain.

This sequence belongs to the CarB family. Composed of two chains; the small (or glutamine) chain promotes the hydrolysis of glutamine to ammonia, which is used by the large (or ammonia) chain to synthesize carbamoyl phosphate. Tetramer of heterodimers (alpha,beta)4. The cofactor is Mg(2+). It depends on Mn(2+) as a cofactor.

The catalysed reaction is hydrogencarbonate + L-glutamine + 2 ATP + H2O = carbamoyl phosphate + L-glutamate + 2 ADP + phosphate + 2 H(+). It catalyses the reaction hydrogencarbonate + NH4(+) + 2 ATP = carbamoyl phosphate + 2 ADP + phosphate + 2 H(+). Its pathway is amino-acid biosynthesis; L-arginine biosynthesis; carbamoyl phosphate from bicarbonate: step 1/1. The protein operates within pyrimidine metabolism; UMP biosynthesis via de novo pathway; (S)-dihydroorotate from bicarbonate: step 1/3. Its function is as follows. Large subunit of the glutamine-dependent carbamoyl phosphate synthetase (CPSase). CPSase catalyzes the formation of carbamoyl phosphate from the ammonia moiety of glutamine, carbonate, and phosphate donated by ATP, constituting the first step of 2 biosynthetic pathways, one leading to arginine and/or urea and the other to pyrimidine nucleotides. The large subunit (synthetase) binds the substrates ammonia (free or transferred from glutamine from the small subunit), hydrogencarbonate and ATP and carries out an ATP-coupled ligase reaction, activating hydrogencarbonate by forming carboxy phosphate which reacts with ammonia to form carbamoyl phosphate. The sequence is that of Carbamoyl phosphate synthase large chain, C-terminal section (carB2) from Methanopyrus kandleri (strain AV19 / DSM 6324 / JCM 9639 / NBRC 100938).